Here is a 139-residue protein sequence, read N- to C-terminus: mRNA stability protein mug134 (139 aa).

The tract at residues Ile-83–Asn-139 is disordered. Basic and acidic residues predominate over residues Ser-124–Asn-139.

It belongs to the endosulfine family.

The protein resides in the nucleus. It localises to the cytoplasm. Its function is as follows. Plays an essential role in initiation of the G0 program by preventing the degradation of specific nutrient-regulated mRNAs via the 5'-3' mRNA decay pathway. This chain is mRNA stability protein mug134 (mug134), found in Schizosaccharomyces pombe (strain 972 / ATCC 24843) (Fission yeast).